A 226-amino-acid polypeptide reads, in one-letter code: Uracil-DNA glycosylase (226 aa).

Catalysis depends on Asp68, which acts as the Proton acceptor.

The protein belongs to the uracil-DNA glycosylase (UDG) superfamily. UNG family.

Its subcellular location is the cytoplasm. The catalysed reaction is Hydrolyzes single-stranded DNA or mismatched double-stranded DNA and polynucleotides, releasing free uracil.. Functionally, excises uracil residues from the DNA which can arise as a result of misincorporation of dUMP residues by DNA polymerase or due to deamination of cytosine. The protein is Uracil-DNA glycosylase of Mycobacteroides abscessus (strain ATCC 19977 / DSM 44196 / CCUG 20993 / CIP 104536 / JCM 13569 / NCTC 13031 / TMC 1543 / L948) (Mycobacterium abscessus).